A 147-amino-acid chain; its full sequence is Hemoglobin subunit epsilon (147 aa).

Positions 3 to 147 constitute a Globin domain; that stretch reads HLTAEEKAAI…VAIALGHKYH (145 aa). S14 and S51 each carry phosphoserine. 2 residues coordinate heme b: H64 and H93.

It belongs to the globin family. As to quaternary structure, heterotetramer of two alpha chains and two epsilon chains in early embryonic hemoglobin Gower-2; two zeta chains and two epsilon chains in early embryonic hemoglobin Gower-1. In terms of tissue distribution, red blood cells.

Functionally, the epsilon chain is a beta-type chain of early mammalian embryonic hemoglobin. The protein is Hemoglobin subunit epsilon (HBE1) of Ateles belzebuth (White-bellied spider monkey).